The sequence spans 335 residues: Mevalonate kinase (335 aa).

111-121 is an ATP binding site; that stretch reads PVGAGLGSSAA. The active-site Proton acceptor is Asp162.

The protein belongs to the GHMP kinase family. Mevalonate kinase subfamily. Homodimer. Requires Mg(2+) as cofactor.

The protein localises to the cytoplasm. The enzyme catalyses (R)-mevalonate + ATP = (R)-5-phosphomevalonate + ADP + H(+). The protein operates within isoprenoid biosynthesis; isopentenyl diphosphate biosynthesis via mevalonate pathway; isopentenyl diphosphate from (R)-mevalonate: step 1/3. In terms of biological role, catalyzes the phosphorylation of (R)-mevalonate (MVA) to (R)-mevalonate 5-phosphate (MVAP). Functions in the mevalonate (MVA) pathway leading to isopentenyl diphosphate (IPP), a key precursor for the biosynthesis of isoprenoid compounds such as archaeal membrane lipids. The sequence is that of Mevalonate kinase from Pyrococcus horikoshii (strain ATCC 700860 / DSM 12428 / JCM 9974 / NBRC 100139 / OT-3).